Here is a 483-residue protein sequence, read N- to C-terminus: Glutamyl-tRNA(Gln) amidotransferase subunit A (483 aa).

Residues lysine 76 and serine 151 each act as charge relay system in the active site. The active-site Acyl-ester intermediate is serine 175.

The protein belongs to the amidase family. GatA subfamily. In terms of assembly, heterotrimer of A, B and C subunits.

The catalysed reaction is L-glutamyl-tRNA(Gln) + L-glutamine + ATP + H2O = L-glutaminyl-tRNA(Gln) + L-glutamate + ADP + phosphate + H(+). Functionally, allows the formation of correctly charged Gln-tRNA(Gln) through the transamidation of misacylated Glu-tRNA(Gln) in organisms which lack glutaminyl-tRNA synthetase. The reaction takes place in the presence of glutamine and ATP through an activated gamma-phospho-Glu-tRNA(Gln). The polypeptide is Glutamyl-tRNA(Gln) amidotransferase subunit A (Pseudomonas savastanoi pv. phaseolicola (strain 1448A / Race 6) (Pseudomonas syringae pv. phaseolicola (strain 1448A / Race 6))).